Consider the following 221-residue polypeptide: Cytidylate kinase (221 aa).

11 to 19 (GPCGAGKST) is a binding site for ATP.

The protein belongs to the cytidylate kinase family. Type 1 subfamily.

It localises to the cytoplasm. It carries out the reaction CMP + ATP = CDP + ADP. The catalysed reaction is dCMP + ATP = dCDP + ADP. In Mycoplasmopsis agalactiae (strain NCTC 10123 / CIP 59.7 / PG2) (Mycoplasma agalactiae), this protein is Cytidylate kinase.